Consider the following 337-residue polypeptide: L-Ala-D/L-amino acid epimerase (337 aa).

Residues T129 and 151-153 each bind substrate; that span reads KIK. 3 residues coordinate Mg(2+): D177, E203, and D228. Residues K250 and 300-302 each bind substrate; that span reads DMD.

This sequence belongs to the mandelate racemase/muconate lactonizing enzyme family. Mg(2+) serves as cofactor.

Functionally, broad specificity dipeptide epimerase. Catalyzes the epimerization of L-Ala-L-Ala, L-Ala-L-Glu, L-Ala-L-Ser, L-Ala-L-Thr and L-Ala-L-Met (in vitro). This chain is L-Ala-D/L-amino acid epimerase, found in Maribacter sp. (strain HTCC2170 / KCCM 42371).